A 276-amino-acid polypeptide reads, in one-letter code: Ribosomal RNA small subunit methyltransferase A (276 aa).

Asn-15, Leu-17, Gly-42, Glu-63, Asp-88, and Asn-111 together coordinate S-adenosyl-L-methionine.

It belongs to the class I-like SAM-binding methyltransferase superfamily. rRNA adenine N(6)-methyltransferase family. RsmA subfamily.

It localises to the cytoplasm. The enzyme catalyses adenosine(1518)/adenosine(1519) in 16S rRNA + 4 S-adenosyl-L-methionine = N(6)-dimethyladenosine(1518)/N(6)-dimethyladenosine(1519) in 16S rRNA + 4 S-adenosyl-L-homocysteine + 4 H(+). Its function is as follows. Specifically dimethylates two adjacent adenosines (A1518 and A1519) in the loop of a conserved hairpin near the 3'-end of 16S rRNA in the 30S particle. May play a critical role in biogenesis of 30S subunits. In Geobacter sulfurreducens (strain ATCC 51573 / DSM 12127 / PCA), this protein is Ribosomal RNA small subunit methyltransferase A.